The primary structure comprises 432 residues: Septin-11 (432 aa).

N-acetylalanine is present on Ala2. At Ser9 the chain carries Phosphoserine. The 267-residue stretch at 38-304 (QGFCFNILCV…ELYRRCKLEE (267 aa)) folds into the Septin-type G domain. The G1 motif stretch occupies residues 48–55 (GETGIGKS). Residues 48 to 55 (GETGIGKS), Gly103, 184 to 192 (KADTIAKNE), Gly238, and Arg253 each bind GTP. Positions 100–103 (DTVG) are G3 motif. Positions 183–186 (AKAD) are G4 motif. Positions 320–413 (QETYEAKRNE…LLQSQAQQSG (94 aa)) form a coiled coil. The span at 403-416 (QLLQSQAQQSGAQQ) shows a compositional bias: low complexity. The disordered stretch occupies residues 403-432 (QLLQSQAQQSGAQQTKKDKDKKNSPWLCTE).

The protein belongs to the TRAFAC class TrmE-Era-EngA-EngB-Septin-like GTPase superfamily. Septin GTPase family. As to quaternary structure, septins polymerize into heterooligomeric protein complexes that form filaments, and can associate with cellular membranes, actin filaments and microtubules. Forms homooligomers. GTPase activity is required for filament formation. Interacts with SEPTIN7, SEPTIN9 and SEPTIN12.

It localises to the cytoplasm. Its subcellular location is the cytoskeleton. The protein resides in the synapse. The protein localises to the cell projection. It is found in the dendritic spine. It localises to the axon. Its function is as follows. Filament-forming cytoskeletal GTPase. May play a role in cytokinesis (Potential). May play a role in the cytoarchitecture of neurons, including dendritic arborization and dendritic spines, and in GABAergic synaptic connectivity. This chain is Septin-11, found in Macaca fascicularis (Crab-eating macaque).